A 139-amino-acid chain; its full sequence is Large ribosomal subunit protein uL16c (139 aa).

It belongs to the universal ribosomal protein uL16 family. As to quaternary structure, part of the 50S ribosomal subunit.

The protein localises to the plastid. Its subcellular location is the chloroplast. In Cryptomeria japonica (Japanese cedar), this protein is Large ribosomal subunit protein uL16c.